We begin with the raw amino-acid sequence, 48 residues long: Ambineela (48 aa).

As to quaternary structure, monomer. Post-translationally, the blue color is due to an unidentified non-fluorescent cofactor, covalently bound to it.

Ambineela is a blue protein and has a pI of 8.7. The protein is Ambineela of Acidianus ambivalens (Desulfurolobus ambivalens).